Consider the following 708-residue polypeptide: Exocyst complex component 5 (708 aa).

Alanine 2 carries the post-translational modification N-acetylalanine. The stretch at 40–101 (KRLLEEFVNH…AFQHFQELDE (62 aa)) forms a coiled coil. Residues threonine 122, threonine 395, and threonine 405 each carry the phosphothreonine modification. Serine 412 is subject to Phosphoserine.

It belongs to the SEC10 family. The exocyst complex is composed of EXOC1, EXOC2, EXOC3, EXOC4, EXOC5, EXOC6, EXOC7 and EXOC8. Interacts with EXOC3L1. As to expression, ubiquitous.

The protein localises to the cytoplasm. It is found in the midbody. Component of the exocyst complex involved in the docking of exocytic vesicles with fusion sites on the plasma membrane. This chain is Exocyst complex component 5 (Exoc5), found in Rattus norvegicus (Rat).